The following is a 393-amino-acid chain: MKYDVVVVGSGVAGPIVARDVAKAGFSVLLVDKKPAIGTPKQCAEGINVNVFKEFDIPYDKRFINREIYGARIYSPSGYTAELRYDKVSGVILERKVFDKMLAYYAAKAGADVWARTEVIDLLRKEGKIMGVKAKHEGELVEIEAKIIVAADGVESTVARLAGINTYAPPHEFDSAYEYEMIIEGYDPDLIHLWFGNEIAPRGYVWVFPKDEDRANVGIGINSDNEKTAKYYLDKWLKENNIPTKKILEINVGLVPVGGFVRELVKENVAVVGDAARQVNPVHGGGMYEAMKAANILAKWIVKALEEENLELLKNYTKEWWEVEGPKMERLLKLRRAMEKLTDEDIDVFVQLLGGTDLEKLAGGNYFEVVKALMKHPKVLMSKRRLEILKALL.

FAD is bound by residues alanine 13, aspartate 32, cysteine 43, alanine 44, glycine 46, arginine 95, valine 119, aspartate 274, and glycine 286. Lysine 327 and glycine 363 together coordinate a 2,3-bis-O-(geranylgeranyl)-sn-glycerol 1-phospholipid.

This sequence belongs to the geranylgeranyl reductase family. DGGGPL reductase subfamily. FAD is required as a cofactor.

It catalyses the reaction a 2,3-bis-O-phytanyl-sn-glycerol 1-phospholipid + 8 A = a 2,3-bis-O-(geranylgeranyl)-sn-glycerol 1-phospholipid + 8 AH2. The enzyme catalyses 2,3-bis-O-(phytanyl)-sn-glycerol 1-phosphate + 8 A = 2,3-bis-O-(geranylgeranyl)-sn-glycerol 1-phosphate + 8 AH2. It carries out the reaction CDP-2,3-bis-O-(geranylgeranyl)-sn-glycerol + 8 AH2 = CDP-2,3-bis-O-(phytanyl)-sn-glycerol + 8 A. The catalysed reaction is archaetidylserine + 8 AH2 = 2,3-bis-O-phytanyl-sn-glycero-3-phospho-L-serine + 8 A. It functions in the pathway membrane lipid metabolism; glycerophospholipid metabolism. Its function is as follows. Is involved in the reduction of 2,3-digeranylgeranylglycerophospholipids (unsaturated archaeols) into 2,3-diphytanylglycerophospholipids (saturated archaeols) in the biosynthesis of archaeal membrane lipids. Catalyzes the formation of archaetidic acid (2,3-di-O-phytanyl-sn-glyceryl phosphate) from 2,3-di-O-geranylgeranylglyceryl phosphate (DGGGP) via the hydrogenation of each double bond of the isoprenoid chains. Is also probably able to reduce double bonds of geranyl groups in CDP-2,3-bis-O-(geranylgeranyl)-sn-glycerol and archaetidylserine, thus acting at various stages in the biosynthesis of archaeal membrane lipids. In Pyrococcus furiosus (strain ATCC 43587 / DSM 3638 / JCM 8422 / Vc1), this protein is Digeranylgeranylglycerophospholipid reductase.